The sequence spans 294 residues: Autophagy protein 5 (294 aa).

Lys-149 is covalently cross-linked (Glycyl lysine isopeptide (Lys-Gly) (interchain with G-Cter in ATG12)).

It belongs to the ATG5 family. Conjugated with ATG12. The ATG5-ATG12 conjugate forms a complex with several units of ATG16. The ATG12-ATG5 conjugate also associates with ATG3. Conjugated to ATG12; which is essential for autophagy. Conjugation with ATG12 involves ATG7 as an E1-like activating enzyme and ATG10 as an E2-like conjugating enzyme.

Its subcellular location is the preautophagosomal structure membrane. Its function is as follows. Involved in cytoplasm to vacuole transport (Cvt) and autophagic vesicle formation. Autophagy is essential for maintenance of amino acid levels and protein synthesis under nitrogen starvation. Required for selective autophagic degradation of the nucleus (nucleophagy). Also required for mitophagy, which eliminates defective or superfluous mitochondria in order to fulfill cellular energy requirements and prevent excess ROS production. Conjugation with ATG12, through a ubiquitin-like conjugating system involving ATG7 as an E1-like activating enzyme and ATG10 as an E2-like conjugating enzyme, is essential for its function. The ATG12-ATG5 conjugate acts as an E3-like enzyme which is required for lipidation of ATG8 and ATG8 association to the vesicle membranes. ATG12-ATG5 rearranges the ATG3 catalytic center and enhances its E2 activity. Plays a role in the regulation of filamentous growth and chronological longevity. In Saccharomyces cerevisiae (strain YJM789) (Baker's yeast), this protein is Autophagy protein 5 (ATG5).